Here is a 428-residue protein sequence, read N- to C-terminus: 3-phosphoshikimate 1-carboxyvinyltransferase (428 aa).

Residues lysine 22, serine 23, and arginine 27 each coordinate 3-phosphoshikimate. A phosphoenolpyruvate-binding site is contributed by lysine 22. Positions 98 and 126 each coordinate phosphoenolpyruvate. 3-phosphoshikimate-binding residues include serine 172, serine 173, glutamine 174, serine 200, aspartate 316, asparagine 339, and lysine 343. Residue glutamine 174 participates in phosphoenolpyruvate binding. Aspartate 316 (proton acceptor) is an active-site residue. The phosphoenolpyruvate site is built by arginine 347, arginine 389, and lysine 414.

Belongs to the EPSP synthase family. As to quaternary structure, monomer.

It is found in the cytoplasm. The enzyme catalyses 3-phosphoshikimate + phosphoenolpyruvate = 5-O-(1-carboxyvinyl)-3-phosphoshikimate + phosphate. It participates in metabolic intermediate biosynthesis; chorismate biosynthesis; chorismate from D-erythrose 4-phosphate and phosphoenolpyruvate: step 6/7. In terms of biological role, catalyzes the transfer of the enolpyruvyl moiety of phosphoenolpyruvate (PEP) to the 5-hydroxyl of shikimate-3-phosphate (S3P) to produce enolpyruvyl shikimate-3-phosphate and inorganic phosphate. This chain is 3-phosphoshikimate 1-carboxyvinyltransferase, found in Psychromonas ingrahamii (strain DSM 17664 / CCUG 51855 / 37).